Reading from the N-terminus, the 426-residue chain is UPF0229 protein Csal_0882 (426 aa).

Positions 82-93 (FVEGDRLRRPGG) are enriched in basic and acidic residues. The interval 82-109 (FVEGDRLRRPGGEGRGGSGEGSASNQGE) is disordered.

This sequence belongs to the UPF0229 family.

The polypeptide is UPF0229 protein Csal_0882 (Chromohalobacter salexigens (strain ATCC BAA-138 / DSM 3043 / CIP 106854 / NCIMB 13768 / 1H11)).